A 473-amino-acid polypeptide reads, in one-letter code: Aspartyl/glutamyl-tRNA(Asn/Gln) amidotransferase subunit B (473 aa).

It belongs to the GatB/GatE family. GatB subfamily. In terms of assembly, heterotrimer of A, B and C subunits.

It catalyses the reaction L-glutamyl-tRNA(Gln) + L-glutamine + ATP + H2O = L-glutaminyl-tRNA(Gln) + L-glutamate + ADP + phosphate + H(+). The catalysed reaction is L-aspartyl-tRNA(Asn) + L-glutamine + ATP + H2O = L-asparaginyl-tRNA(Asn) + L-glutamate + ADP + phosphate + 2 H(+). Allows the formation of correctly charged Asn-tRNA(Asn) or Gln-tRNA(Gln) through the transamidation of misacylated Asp-tRNA(Asn) or Glu-tRNA(Gln) in organisms which lack either or both of asparaginyl-tRNA or glutaminyl-tRNA synthetases. The reaction takes place in the presence of glutamine and ATP through an activated phospho-Asp-tRNA(Asn) or phospho-Glu-tRNA(Gln). The chain is Aspartyl/glutamyl-tRNA(Asn/Gln) amidotransferase subunit B from Sulfurisphaera tokodaii (strain DSM 16993 / JCM 10545 / NBRC 100140 / 7) (Sulfolobus tokodaii).